Consider the following 440-residue polypeptide: Tetratricopeptide repeat protein 5 (440 aa).

TPR repeat units follow at residues 7–61 (EEVK…EEVV), 68–98 (AQVLMLTGKALNVTPDYSPKAEELLSKAVKL), 103–130 (VEAWNQLGEVYWKKGDVAAAHTCFSGAL), 136–174 (KVSLQNLSMVLRQLRTDSGDEHSRHVMDSVRQAKLAVQM), and 179–216 (GRSWYILGNAYLSLYFNTGQNPKISQQALSAYAQAEKV). A Nuclear export signal motif is present at residues 13-24 (LQKLQELVDQLY). Ser-203 carries the phosphoserine; by ATM modification. Residue Ser-221 is modified to Phosphoserine; by CHEK2. Residues 224 to 253 (PDLHLNRATLHKYEENYGEALEGFSRAAAL) form a TPR 6 repeat. Positions 285–287 (KTK) are mediates interaction with 28S rRNA of ribosome-coding tubulin.

In terms of assembly, interacts with JMY and p300/EP300; the interaction occurs in the nucleus and augments the association between JMY and p300/EP300 in response to DNA damage. Interacts with PRMT5; the interaction is DNA damage-dependent and promotes PRMT5 interaction with p53/TP53 and subsequent methylation. Forms a complex with HSF1 and p300/EP300; these interactions augment chromatin-bound HSF1 and p300/EP300 histone acetyltransferase activity, resulting in enhanced heat-shock-responsive transcription. Interacts with JMY; the interaction occurs in the cytoplasm and results in the inhibition of JYM's nucleation activity. Interacts with ribosome-coding tubulin (via 60S subunit 28S rRNA and protein uL24/RPL26) and the N-terminal of nascent tubulin polypeptide (via alpha-tubulin MREC motif and beta-tubulin MREI motif); these interactions result in tubulin mRNA-targeted degradation. Interacts with ATP5F1B; the interaction occurs in the mitochondria and results in ATP production decrease. Interacts with p53/TP53; the interaction occurs in the mitochondria and results in increased apoptosis. Phosphorylation by ATM kinase induces nuclear accumulation while interfering with nuclear export, and phosphorylation by CHEK2 kinase enhances nuclear stability.

The protein resides in the nucleus. It localises to the cytoplasm. It is found in the cytoplasmic vesicle. Its subcellular location is the mitochondrion matrix. Its function is as follows. Cofactor involved in the regulation of various cellular mechanisms such as actin regulation, autophagy, chromatin regulation and DNA repair. In physiological conditions, interacts with cofactor JMY in the cytoplasm which prevents JMY's actin nucleation activity and ability to activate the Arp2/3 complex. Acts as a negative regulator of nutrient stress-induced autophagy by inhibiting JMY's interaction with MAP1LC3B, thereby preventing autophagosome formation. Involves in tubulin autoregulation by promoting its degradation in response to excess soluble tubulin. To do so, associates with the active ribosome near the ribosome exit tunnel and with nascent tubulin polypeptides early during their translation, triggering tubulin mRNA-targeted degradation. Following DNA damage, phosphorylated by DNA damage responsive protein kinases ATM and CHEK2, leading to its nuclear accumulation and stability. Nuclear TTC5/STRAP promotes the assembly of a stress-responsive p53/TP53 coactivator complex, which includes the coactivators JMY and p300, thereby increasing p53/TP53-dependent transcription and apoptosis. Also recruits arginine methyltransferase PRMT5 to p53/TP53 when DNA is damaged, allowing PRMT5 to methylate p53/TP53. In DNA stress conditions, also prevents p53/TP53 degradation by E3 ubiquitin ligase MDM2. Upon heat-shock stress, forms a chromatin-associated complex with heat-shock factor 1 HSF1 and p300/EP300 to stimulate heat-shock-responsive transcription, thereby increasing cell survival. Mitochondrial TTC5/STRAP interacts with ATP synthase subunit beta ATP5F1B which decreased ATP synthase activity and lowers mitochondrial ATP production, thereby regulating cellular respiration and mitochondrial-dependent apoptosis. Mitochondrial TTC5/STRAP also regulates p53/TP53-mediated apoptosis. This chain is Tetratricopeptide repeat protein 5 (TTC5), found in Bos taurus (Bovine).